Here is a 340-residue protein sequence, read N- to C-terminus: Glycerol-3-phosphate dehydrogenase [NAD(P)+] (340 aa).

Residues Ser14, Phe15, Arg35, and Lys108 each coordinate NADPH. Lys108 and Gly136 together coordinate sn-glycerol 3-phosphate. Ala140 lines the NADPH pocket. Lys191, Asp244, Ser254, Arg255, and Asn256 together coordinate sn-glycerol 3-phosphate. Lys191 acts as the Proton acceptor in catalysis. Arg255 contacts NADPH. NADPH contacts are provided by Val279 and Glu281.

It belongs to the NAD-dependent glycerol-3-phosphate dehydrogenase family.

The protein resides in the cytoplasm. The enzyme catalyses sn-glycerol 3-phosphate + NAD(+) = dihydroxyacetone phosphate + NADH + H(+). It catalyses the reaction sn-glycerol 3-phosphate + NADP(+) = dihydroxyacetone phosphate + NADPH + H(+). It functions in the pathway membrane lipid metabolism; glycerophospholipid metabolism. Catalyzes the reduction of the glycolytic intermediate dihydroxyacetone phosphate (DHAP) to sn-glycerol 3-phosphate (G3P), the key precursor for phospholipid synthesis. This is Glycerol-3-phosphate dehydrogenase [NAD(P)+] from Azotobacter vinelandii (strain DJ / ATCC BAA-1303).